The chain runs to 25 residues: Xenoposin precursor fragment BM2 (25 aa).

In terms of tissue distribution, expressed by the skin glands.

The protein resides in the secreted. In terms of biological role, antimicrobial peptide. The chain is Xenoposin precursor fragment BM2 from Xenopus boumbaensis (Mawa clawed frog).